We begin with the raw amino-acid sequence, 615 residues long: uncharacterized protein (615 aa).

This sequence belongs to the mycobacterial PPE family.

This is an uncharacterized protein from Mycobacterium tuberculosis (strain CDC 1551 / Oshkosh).